Here is a 506-residue protein sequence, read N- to C-terminus: UPF0371 protein FN1121 (506 aa).

Belongs to the UPF0371 family.

This is UPF0371 protein FN1121 from Fusobacterium nucleatum subsp. nucleatum (strain ATCC 25586 / DSM 15643 / BCRC 10681 / CIP 101130 / JCM 8532 / KCTC 2640 / LMG 13131 / VPI 4355).